A 44-amino-acid chain; its full sequence is CQAYGESCSAVVRCCDPNAVCCQYPEDAVCVTRGYCRPPATVLT.

4 disulfides stabilise this stretch: cysteine 1/cysteine 15, cysteine 8/cysteine 22, cysteine 14/cysteine 30, and cysteine 21/cysteine 36.

Expressed by the venom duct.

The protein resides in the secreted. Neurotoxin. Elicits hypersensibility when injected intracranially in mice. May act via potassium channel currents. This Conus regius (Crown cone) protein is Conotoxin Rg11a.